The sequence spans 385 residues: Homoserine O-succinyltransferase (385 aa).

Residues 46–355 (NAILICHALS…NSQHGHDAFL (310 aa)) enclose the AB hydrolase-1 domain. Residue Ser151 is the Nucleophile of the active site. Arg221 is a substrate binding site. Residues Asp318 and His351 contribute to the active site. Residue Asp352 coordinates substrate.

Belongs to the AB hydrolase superfamily. MetX family. In terms of assembly, homodimer.

The protein resides in the cytoplasm. It carries out the reaction L-homoserine + succinyl-CoA = O-succinyl-L-homoserine + CoA. The protein operates within amino-acid biosynthesis; L-methionine biosynthesis via de novo pathway; O-succinyl-L-homoserine from L-homoserine: step 1/1. Transfers a succinyl group from succinyl-CoA to L-homoserine, forming succinyl-L-homoserine. The polypeptide is Homoserine O-succinyltransferase (Hydrogenovibrio crunogenus (strain DSM 25203 / XCL-2) (Thiomicrospira crunogena)).